The sequence spans 456 residues: Phosphomethylpyrimidine synthase (456 aa).

Substrate is bound by residues Asn80, Met109, Tyr139, His175, 195-197, 236-239, and Glu275; these read SRG and DSLR. Residue His279 coordinates Zn(2+). Tyr302 is a substrate binding site. His343 contacts Zn(2+). [4Fe-4S] cluster is bound by residues Cys423, Cys426, and Cys431.

It belongs to the ThiC family. It depends on [4Fe-4S] cluster as a cofactor.

The enzyme catalyses 5-amino-1-(5-phospho-beta-D-ribosyl)imidazole + S-adenosyl-L-methionine = 4-amino-2-methyl-5-(phosphooxymethyl)pyrimidine + CO + 5'-deoxyadenosine + formate + L-methionine + 3 H(+). Its pathway is cofactor biosynthesis; thiamine diphosphate biosynthesis. Its function is as follows. Catalyzes the synthesis of the hydroxymethylpyrimidine phosphate (HMP-P) moiety of thiamine from aminoimidazole ribotide (AIR) in a radical S-adenosyl-L-methionine (SAM)-dependent reaction. This chain is Phosphomethylpyrimidine synthase, found in Synechococcus elongatus (strain ATCC 33912 / PCC 7942 / FACHB-805) (Anacystis nidulans R2).